The chain runs to 323 residues: Replication-associated protein A (323 aa).

The CRESS-DNA virus Rep endonuclease domain maps to 18 to 121 (RHRNANTFLT…PKDKWEKGTY (104 aa)). Residues 25-28 (FLTY) carry the RCR-1 motif. 3 residues coordinate a divalent metal cation: E59, H67, and H69. The short motif at 67–69 (HCH) is the RCR-2 element. The active-site For DNA cleavage activity is Y107. The RCR-3 motif lies at 107–110 (YILK). D111 is a binding site for a divalent metal cation. Positions 181–193 (SASRLFPDIAEPY) are oligomerization. The LXCXE motif, interaction with host RBR1 signature appears at 204–208 (LHCNE). Residues 256 to 286 (KEREASTSAAQHGQVKHPGLEASDDTTTGKT) form a disordered region.

It belongs to the geminiviridae Rep protein family. Homooligomer. Interacts (via LXCXE domain) with host retinoblastoma-related protein 1 (RBR1), and may thereby deregulate the host cell cycle. Part of the C- and V-complexes which are RepA-Rep-DNA complexes involved in the c-sense and v-sense transcription. Mg(2+) is required as a cofactor. The cofactor is Mn(2+).

It localises to the host nucleus. It is found in the host cytoplasm. In terms of biological role, implicated in enhancement of V-sense gene expression. Acts a an inhibitor of C-sense gene transcription. This Megathyrsus maximus (PanSV) protein is Replication-associated protein A.